The primary structure comprises 130 residues: Small ribosomal subunit protein uS11 (130 aa).

It belongs to the universal ribosomal protein uS11 family. Part of the 30S ribosomal subunit. Interacts with proteins S7 and S18. Binds to IF-3.

Its function is as follows. Located on the platform of the 30S subunit, it bridges several disparate RNA helices of the 16S rRNA. Forms part of the Shine-Dalgarno cleft in the 70S ribosome. This Prochlorococcus marinus (strain MIT 9211) protein is Small ribosomal subunit protein uS11.